We begin with the raw amino-acid sequence, 1436 residues long: Non-structural polyprotein 1AB (1436 aa).

Residues 104–142 are a coiled coil; sequence KLIHKANALQERLRLSQEEKATLALDVQFLQHENVRLKE. 5 helical membrane passes run 156–176, 239–259, 286–306, 313–333, and 344–364; these read WIIM…YAHS, VFYY…LAIG, VLPT…TLMV, LLAI…LCFM, and GLIA…LTGT. Residues H461, D489, and S551 each act as charge relay system; for serine protease activity in the active site. A coiled-coil region spans residues 587-620; it reads VKAPSQVELLKEEIERLKAQLNSATENATTVVTQ. Y693 carries the O-(5'-phospho-RNA)-tyrosine modification. 2 disordered regions span residues 756–828 and 913–934; these read AKPI…YSQT and SKNK…EDQG. Positions 1181 to 1307 constitute a RdRp catalytic domain; it reads KHFIEFDWTR…TTPSVPDDYE (127 aa).

This sequence belongs to the astroviridae polyprotein 1AB family. Monomer. In terms of processing, cleaved by the viral and host proteases. The protease is probably autocatalytically cleaved.

It localises to the host membrane. The enzyme catalyses RNA(n) + a ribonucleoside 5'-triphosphate = RNA(n+1) + diphosphate. Functionally, responsible for the cleavage of the polyprotein into functional products. Its function is as follows. Protein covalently attached to the 5' extremity of the genomic and subgenomic RNAs. It may serve as a primer for the replicase. This Homo sapiens (Human) protein is Non-structural polyprotein 1AB (ORF1).